The chain runs to 326 residues: Fos-related antigen 2 (326 aa).

N-acetylmethionine is present on Met1. The segment at Met1–Asp39 is disordered. Over residues Phe9–Ser19 the composition is skewed to polar residues. Lys35 is covalently cross-linked (Glycyl lysine isopeptide (Lys-Gly) (interchain with G-Cter in SUMO2)). Lys104 carries the post-translational modification N6-acetyllysine; alternate. Residue Lys104 forms a Glycyl lysine isopeptide (Lys-Gly) (interchain with G-Cter in SUMO2); alternate linkage. 3 disordered regions span residues Gly111 to Arg131, Ile193 to Val244, and Glu289 to Leu326. Residue Ser120 is modified to Phosphoserine. The bZIP domain maps to Glu124–His187. The tract at residues Lys126–Arg128 is basic motif. The leucine-zipper stretch occupies residues Ile129–Leu136. A Phosphoserine modification is found at Ser200. The segment covering Pro201–Gly211 has biased composition (polar residues). Lys222 participates in a covalent cross-link: Glycyl lysine isopeptide (Lys-Gly) (interchain with G-Cter in SUMO2); alternate. Lys222 is covalently cross-linked (Glycyl lysine isopeptide (Lys-Gly) (interchain with G-Cter in SUMO1); alternate). Ser230 carries the phosphoserine modification. Lys239 is covalently cross-linked (Glycyl lysine isopeptide (Lys-Gly) (interchain with G-Cter in SUMO2)). Phosphoserine is present on residues Ser308 and Ser320. Low complexity predominate over residues Ser308–Ser320.

Belongs to the bZIP family. Fos subfamily. In terms of assembly, heterodimer. Interacts with the BAF multiprotein chromatin-remodeling complex subunits SMARCB1 and SMARCD1. Interacts with ARID1A and JUN. As to expression, expressed in the brain cortex. Expressed at night in pineal gland (at protein level). Also expressed in osteoblasts (at protein level).

The protein resides in the nucleus. In terms of biological role, controls osteoclast survival and size. As a dimer with JUN, activates LIF transcription. Activates CEBPB transcription in PGE2-activated osteoblasts. This is Fos-related antigen 2 (Fosl2) from Rattus norvegicus (Rat).